A 503-amino-acid chain; its full sequence is MIGRTREQKQGGELSVEDIQDPFLVSIHIIADPGESKCLQEAIDRLLVWIHPDLQLFCVSERRVLKKKKPSKSFASHPALAIILFLQEDYGEEQILHLHKCFQKPPWQFHHTERVHGKFLPYMPCNQDFFTLANGTPLWAIRQVHYGKEIIRFTIYCSYENFADMMKMYELIIKKRVWRKKTDFCVFPVYSNMDFDIEFSLKRLVKGQKPVPLESSLLEFRVRDFGQLIPLLPNQCSPISEGRWKTEDHDGNKILLQQAQCLARKTAWKHQNYASRTAAMTQPLSIAPRSRKLKYGKHKARASHGQVQHFGGSQTDFPMGQVDTFRSLKFPSEAAQAFQRSKSLYCLPTMSTFPSCHSFPMSEPHPCFGLDTYETPAWRISPKINIDDLEGVEETDVDTGMKLSSSDLSVVSAYSPLNGPCSDLEASLPSEGALAQSDTVPGRQNHSSDSLHSVSDISSSPCPVFPSTPAQSQKHILSHYHQLSEITSHLSETLNIEEEEFYI.

Residues 434–470 form a disordered region; it reads LAQSDTVPGRQNHSSDSLHSVSDISSSPCPVFPSTPA. Positions 436–445 are enriched in polar residues; that stretch reads QSDTVPGRQN. Residues 447 to 460 are compositionally biased toward low complexity; the sequence is SSDSLHSVSDISSS.

It belongs to the FAM124 family.

This chain is Protein FAM124A (fam124a), found in Xenopus tropicalis (Western clawed frog).